A 587-amino-acid polypeptide reads, in one-letter code: Sulfite reductase [NADPH] hemoprotein beta-component (587 aa).

Positions 1-13 are enriched in polar residues; the sequence is MQSTDNDLSQSPP. The segment at 1–20 is disordered; the sequence is MQSTDNDLSQSPPKLSADEQ. [4Fe-4S] cluster contacts are provided by cysteine 439, cysteine 445, cysteine 484, and cysteine 488. Residue cysteine 488 participates in siroheme binding.

It belongs to the nitrite and sulfite reductase 4Fe-4S domain family. In terms of assembly, alpha(8)-beta(8). The alpha component is a flavoprotein, the beta component is a hemoprotein. Requires siroheme as cofactor. [4Fe-4S] cluster serves as cofactor.

It carries out the reaction hydrogen sulfide + 3 NADP(+) + 3 H2O = sulfite + 3 NADPH + 4 H(+). It participates in sulfur metabolism; hydrogen sulfide biosynthesis; hydrogen sulfide from sulfite (NADPH route): step 1/1. Functionally, component of the sulfite reductase complex that catalyzes the 6-electron reduction of sulfite to sulfide. This is one of several activities required for the biosynthesis of L-cysteine from sulfate. This Bordetella petrii (strain ATCC BAA-461 / DSM 12804 / CCUG 43448) protein is Sulfite reductase [NADPH] hemoprotein beta-component.